Here is a 136-residue protein sequence, read N- to C-terminus: Acyl carrier protein 1, chloroplastic (136 aa).

The transit peptide at 1–52 (MASVTGTSISMASFKASLAPSRVSNLRSVSLPIKGKSFAPLRMRSARFVVCC) directs the protein to the chloroplast. Residues 56–131 (PETVEKVCAI…DAADLIEKLI (76 aa)) form the Carrier domain. Ser91 is modified (O-(pantetheine 4'-phosphoryl)serine).

Belongs to the acyl carrier protein (ACP) family. 4'-phosphopantetheine is transferred from CoA to a specific serine of apo-ACP by acpS. This modification is essential for activity because fatty acids are bound in thioester linkage to the sulfhydryl of the prosthetic group.

It is found in the plastid. The protein resides in the chloroplast. Its pathway is lipid metabolism; fatty acid biosynthesis. Its function is as follows. Carrier of the growing fatty acid chain in fatty acid biosynthesis. The chain is Acyl carrier protein 1, chloroplastic (ACP1) from Casuarina glauca (Swamp oak).